The primary structure comprises 218 residues: Small ribosomal subunit protein mS34 (218 aa).

The disordered stretch occupies residues 180 to 218 (KNGDTSTEEPMLNVQRIRMEPWDYPAKQEDKGRAKGTPV). Residues 196-212 (IRMEPWDYPAKQEDKGR) are compositionally biased toward basic and acidic residues.

The protein belongs to the mitochondrion-specific ribosomal protein mS34 family. In terms of assembly, component of the mitochondrial small ribosomal subunit (mt-SSU). Mature mammalian 55S mitochondrial ribosomes consist of a small (28S) and a large (39S) subunit. The 28S small subunit contains a 12S ribosomal RNA (12S mt-rRNA) and 30 different proteins. The 39S large subunit contains a 16S rRNA (16S mt-rRNA), a copy of mitochondrial valine transfer RNA (mt-tRNA(Val)), which plays an integral structural role, and 52 different proteins.

It localises to the mitochondrion. Required for mitochondrial translation, plays a role in maintaining the stability of the small ribosomal subunit and the 12S rRNA that are required for mitoribosome formation. The chain is Small ribosomal subunit protein mS34 (MRPS34) from Homo sapiens (Human).